Reading from the N-terminus, the 834-residue chain is Periplasmic nitrate reductase (834 aa).

The segment at residues 1 to 32 (MTDMKIDRRQMLKLEAAAIAAAAAGMPSTSLA) is a signal peptide (tat-type signal). The 4Fe-4S Mo/W bis-MGD-type domain occupies 44 to 100 (LKWDKAACRFCGTGCSVMVATKDNRVVATHGDIKAEVNRGLNCVKGYFLSKIMYGHD). 4 residues coordinate [4Fe-4S] cluster: C51, C54, C58, and C86. Residues K88, Q155, N180, C184, 217–224 (WGSNMAEM), 248–252 (STFEH), 267–269 (QTD), M378, Q382, N488, 514–515 (SD), K537, D564, and 724–733 (TGRVVEHWHS) contribute to the Mo-bis(molybdopterin guanine dinucleotide) site. W800 contacts substrate. The Mo-bis(molybdopterin guanine dinucleotide) site is built by N808 and K825.

It belongs to the prokaryotic molybdopterin-containing oxidoreductase family. NasA/NapA/NarB subfamily. Component of the periplasmic nitrate reductase NapAB complex composed of NapA and NapB. Requires [4Fe-4S] cluster as cofactor. It depends on Mo-bis(molybdopterin guanine dinucleotide) as a cofactor. Predicted to be exported by the Tat system. The position of the signal peptide cleavage has not been experimentally proven.

Its subcellular location is the periplasm. It carries out the reaction 2 Fe(II)-[cytochrome] + nitrate + 2 H(+) = 2 Fe(III)-[cytochrome] + nitrite + H2O. In terms of biological role, catalytic subunit of the periplasmic nitrate reductase complex NapAB. Receives electrons from NapB and catalyzes the reduction of nitrate to nitrite. In Bradyrhizobium sp. (strain BTAi1 / ATCC BAA-1182), this protein is Periplasmic nitrate reductase.